The primary structure comprises 218 residues: Peptidyl-prolyl cis-trans isomerase FKBP7 (218 aa).

The N-terminal stretch at 1–19 is a signal peptide; that stretch reads MNLLFRLAVFLSLWCCSDA. 2 N-linked (GlcNAc...) asparagine glycosylation sites follow: N41 and N128. One can recognise a PPIase FKBP-type domain in the interval 49 to 141; it reads GDLLNAHYDG…MFEIELYAVT (93 aa). 2 EF-hand domains span residues 141 to 176 and 185 to 218; these read TKGP…DFEK and YQKA…HDEL. 9 residues coordinate Ca(2+): D154, D156, D158, Q160, E165, D198, N200, D202, and E209. A disordered region spans residues 197-218; the sequence is NDHNGDGFISPKEYNVHQHDEL. Residues 215–218 carry the Prevents secretion from ER motif; that stretch reads HDEL.

Post-translationally, glycosylated. Expressed at highest levels in heart, lung and testis. Weakly expressed in kidney and lymph node. Little or no expression detected in brain, thymus, spleen and liver.

It localises to the endoplasmic reticulum lumen. It carries out the reaction [protein]-peptidylproline (omega=180) = [protein]-peptidylproline (omega=0). PPIases accelerate the folding of proteins during protein synthesis. The chain is Peptidyl-prolyl cis-trans isomerase FKBP7 (Fkbp7) from Mus musculus (Mouse).